A 428-amino-acid polypeptide reads, in one-letter code: GTPase Obg (428 aa).

One can recognise an Obg domain in the interval 1–158; it reads MFVDQVKVYV…RYIVLELKVL (158 aa). A disordered region spans residues 117-143; sequence AKGGRGGRGNTRFATPANPAPQLSEHG. The OBG-type G domain maps to 159–329; it reads ADVGLVGFPS…LLFEVANQLE (171 aa). GTP is bound by residues 165-172, 190-194, 212-215, 282-285, and 310-312; these read GFPSVGKS, FTTLV, DLPG, NKMD, and SAV. Residues S172 and T192 each coordinate Mg(2+). The region spanning 350–428 is the OCT domain; that stretch reads TMEDEEIPFN…LLEFEFEFID (79 aa).

The protein belongs to the TRAFAC class OBG-HflX-like GTPase superfamily. OBG GTPase family. In terms of assembly, monomer. Requires Mg(2+) as cofactor.

It is found in the cytoplasm. An essential GTPase which binds GTP, GDP and possibly (p)ppGpp with moderate affinity, with high nucleotide exchange rates and a fairly low GTP hydrolysis rate. Plays a role in control of the cell cycle, stress response, ribosome biogenesis and in those bacteria that undergo differentiation, in morphogenesis control. This Bacillus velezensis (strain DSM 23117 / BGSC 10A6 / LMG 26770 / FZB42) (Bacillus amyloliquefaciens subsp. plantarum) protein is GTPase Obg.